The chain runs to 241 residues: Putative hydrolase 080R (241 aa).

Residues 50–241 (FPDLSFNLMV…VIKVQKIMIL (192 aa)) form the Nudix hydrolase domain. Positions 136 to 157 (GHCNGNEPVLSTLLREFREETT) match the Nudix box motif. Mg(2+) is bound by residues glutamate 151, glutamate 155, and aspartate 204.

This sequence belongs to the Nudix hydrolase family.

The polypeptide is Putative hydrolase 080R (Aedes vexans (Inland floodwater mosquito)).